A 706-amino-acid chain; its full sequence is Serotransferrin (706 aa).

A signal peptide spans 1-19 (MRLAIRALLACAVLGLCLA). Transferrin-like domains follow at residues 23–349 (VRWC…NLRE) and 363–691 (VKWC…NLRQ). Cystine bridges form between cysteine 26-cysteine 64 and cysteine 36-cysteine 55. Arginine 40 bears the Dimethylated arginine mark. Positions 79 and 111 each coordinate Fe(3+). Cystine bridges form between cysteine 134–cysteine 215, cysteine 174–cysteine 190, cysteine 177–cysteine 198, cysteine 187–cysteine 200, and cysteine 248–cysteine 262. 4 residues coordinate hydrogencarbonate: threonine 136, arginine 140, alanine 142, and glycine 143. Tyrosine 209 provides a ligand contact to Fe(3+). Histidine 270 contacts Fe(3+). 11 disulfide bridges follow: cysteine 360/cysteine 623, cysteine 366/cysteine 398, cysteine 376/cysteine 389, cysteine 423/cysteine 701, cysteine 441/cysteine 664, cysteine 474/cysteine 550, cysteine 498/cysteine 692, cysteine 508/cysteine 522, cysteine 519/cysteine 533, cysteine 590/cysteine 604, and cysteine 642/cysteine 647. Position 391 is a phosphoserine (serine 391). Residues aspartate 413 and tyrosine 449 each contribute to the Fe(3+) site. Threonine 476, arginine 480, alanine 482, and glycine 483 together coordinate hydrogencarbonate. A glycan (N-linked (GlcNAc...) asparagine) is linked at asparagine 515. Position 544 (tyrosine 544) interacts with Fe(3+). A Fe(3+)-binding site is contributed by histidine 612. The residue at position 693 (serine 693) is a Phosphoserine.

This sequence belongs to the transferrin family. In terms of assembly, monomer. Part of a complex composed of SLC40A1/ferroportin, TF/transferrin and HEPH/hephaestin that transfers iron from cells to transferrin. In terms of tissue distribution, expressed by the liver and secreted in plasma.

The protein localises to the secreted. In terms of biological role, transferrins are iron binding transport proteins which can bind two Fe(3+) ions in association with the binding of an anion, usually bicarbonate. It is responsible for the transport of iron from sites of absorption and heme degradation to those of storage and utilization. Serum transferrin may also have a further role in stimulating cell proliferation. In Equus caballus (Horse), this protein is Serotransferrin (TF).